The following is a 184-amino-acid chain: MIAALRGNIFEKDGGKILLDVNNVIYELNVSMITFSSVNDKGLFYITEIIKENEYTLYGFADKNEKKLFDSLIKLNGVGPKVALAICSTYTPQTFMDIIANHDINALKKIPGIGPKSAKRILMEMGEFEVVFEEQNPVFNQALSALESLGFNKNDIVKALNGIKSDNLEETIKLALKKLSKDIK.

The segment at 1–61 is domain I; it reads MIAALRGNIF…ENEYTLYGFA (61 aa). Residues 62 to 135 form a domain II region; it reads DKNEKKLFDS…GEFEVVFEEQ (74 aa). Gln135 is a region of interest (flexible linker). The domain III stretch occupies residues 135–184; that stretch reads QNPVFNQALSALESLGFNKNDIVKALNGIKSDNLEETIKLALKKLSKDIK.

It belongs to the RuvA family. In terms of assembly, homotetramer. Forms an RuvA(8)-RuvB(12)-Holliday junction (HJ) complex. HJ DNA is sandwiched between 2 RuvA tetramers; dsDNA enters through RuvA and exits via RuvB. An RuvB hexamer assembles on each DNA strand where it exits the tetramer. Each RuvB hexamer is contacted by two RuvA subunits (via domain III) on 2 adjacent RuvB subunits; this complex drives branch migration. In the full resolvosome a probable DNA-RuvA(4)-RuvB(12)-RuvC(2) complex forms which resolves the HJ.

The protein resides in the cytoplasm. Its function is as follows. The RuvA-RuvB-RuvC complex processes Holliday junction (HJ) DNA during genetic recombination and DNA repair, while the RuvA-RuvB complex plays an important role in the rescue of blocked DNA replication forks via replication fork reversal (RFR). RuvA specifically binds to HJ cruciform DNA, conferring on it an open structure. The RuvB hexamer acts as an ATP-dependent pump, pulling dsDNA into and through the RuvAB complex. HJ branch migration allows RuvC to scan DNA until it finds its consensus sequence, where it cleaves and resolves the cruciform DNA. In Nautilia profundicola (strain ATCC BAA-1463 / DSM 18972 / AmH), this protein is Holliday junction branch migration complex subunit RuvA.